A 127-amino-acid polypeptide reads, in one-letter code: Secreted RxLR effector protein 7 (127 aa).

A signal peptide spans 1 to 21; sequence MRSAYYVLTALLVVASSQVAA. Positions 48–65 match the RxLR-dEER motif; that stretch reads RFLRESRDVHGNVANEER.

The protein belongs to the RxLR effector family.

It is found in the secreted. It localises to the host nucleus. The protein localises to the host cytoplasm. Its function is as follows. Secreted effector that completely suppresses the host cell death induced by cell death-inducing proteins. The protein is Secreted RxLR effector protein 7 of Plasmopara viticola (Downy mildew of grapevine).